The sequence spans 403 residues: F-box/kelch-repeat protein At5g43190 (403 aa).

Positions 45-91 (PNIWSNLPNHLLEHILSLLPFKTLLTLRSISRHLRSLILSPSFISDH) constitute an F-box domain. Kelch repeat units follow at residues 91-140 (HSFS…LLSS), 192-240 (KIFT…VFYN), 291-339 (ILYM…VCYH), and 343-393 (HVYC…FRWF).

This Arabidopsis thaliana (Mouse-ear cress) protein is F-box/kelch-repeat protein At5g43190.